Reading from the N-terminus, the 505-residue chain is MRYEELDEACRSLEHLASDAEAEGEDAPLIPDPPGAVSPPTSLSGKAVLQVILLCASATLTLDIGLTVVRAPKIRLFESILCQAYYRTHGNPLPVPMQNIPESQCKTKEIQSGVARLIGWQTVFDGIPAIFLAIPYGALSDSKGRRPVLLLCFLGLALSTAWALLVCWMQWPLELTWISSLFQCLGGGPAVATAVLEATIADVVPDDKRSTIYFQLQATVLISDILANPLSSVLMAHNAWTPCFLGVGIQALATVLLIALPETLDFAKGSRPSDASIYGCKEEEPTLRGCLAKNFRSIVSDRNVAGLVFSLLILTVSAESLDFLLQYVSQRYGWSIAQSAMLLSLRAVVEFGLLLVVGSLLLFTQSSGLRNPRQRDLLIARLSLGLIVAGLLILSLSPTVAPAILVYTLGAGFQPAIMSLLASLWKASNPSNLGSLYSTVAIILAVGGVISGPLISLMYRIGLSLGHGWVGLPYFVASGLCAGIAGVLLSVKLPEQEQKPRRRET.

The next 12 helical transmembrane spans lie at 48–68, 117–137, 148–168, 181–201, 216–236, 240–260, 304–324, 343–363, 377–399, 403–425, 439–459, and 469–489; these read VLQV…GLTV, LIGW…IPYG, VLLL…LVCW, LFQC…ATIA, LQAT…VLMA, WTPC…LIAL, VAGL…LDFL, LSLR…LLLF, LLIA…LSPT, AILV…ASLW, TVAI…SLMY, and WVGL…GVLL.

The protein belongs to the major facilitator superfamily.

The protein resides in the membrane. The protein operates within secondary metabolite biosynthesis. Its function is as follows. MFS efflux pump; part of the gene cluster that mediates the biosynthesis of aspercryptins, linear lipopeptides built from six amino acids including 2 highly unusual and nonproteogenic amino acids, 2-amino-octanoic acid (2aoa) and 2-amino-dodecanol (2adol). This is MFS efflux pump atnC from Emericella nidulans (strain FGSC A4 / ATCC 38163 / CBS 112.46 / NRRL 194 / M139) (Aspergillus nidulans).